The chain runs to 817 residues: MPIDRSVVRARIENAAEYVGPLWPLRTFNAANPLLGFEDQPFDRAVQKAGQLFGGRGYPGPTVFRQAWENGEIDADVLTRHLAEHGITERPEVLLDRMDADAAGRDAAPADQPLDRVLTKWLAAFLDQGQAAWPMPNREDGFYAAWRTVAPYDGDIPGVGRPSDLPGTVVEAFEAVLESYPEARWEPIFVHHLTALPGWTGFIKWRSRRADTAWQAAHPISLTEYLAVRLTLADRMGAAIAPDRTDELPANGTDQPVLPRIWLRAWEESYRTRLLDDLRQTQQTTPSGSDAGRPDAQLVFCIDTRSEVIRRHIEQQGPYETHGYAGFFGVPMQHQPYGTEERVKSCPPIVDPKHRIMERPAEPHRAQAERYDWWARLQKAGAALLKTLKKNVAAVFGFVEGSGGFFGAAMAARTLAPSGLSRLDEALDDWLPGPASFCEPTVDRAPPADADAEDGLPVGLADEAKVLYAEAAFRLMGWTDTFAPVVVFTGHGSQTPNNPYKASLDCGACAGNPGGPNARVLAAICNEDAVQEALRERGIAIPDDTVFLAGQHNTTTDEIALFVDEDDPPVAPDALDRLRRDLHAAQADAATERVRTLNTSVDEGRPAAAVRETERRAADWAETRPEWGLAGNAAFIVGPRALTRGLDLDGRCFLHSYDWATDDDGTALENIMTGPLVVGEWINTQYYFSTVDNAAYGSGSKVTQNVVGKLGVVQGNGGDLMSGLPLQSLKADDEHVHHRPLRLMALIQAPTDRVEAILDRHAAVAHLFDHEWMHLTVMDPEQDDAFVRYKPGGGWHARPAPDASTATKAPASAGVPS.

Residues Cys301, Asp303, His491, and Cys506 each coordinate Zn(2+). Disordered stretches follow at residues 598-617 and 794-817; these read NTSVDEGRPAAAVRETERRA and GWHARPAPDASTATKAPASAGVPS.

This sequence belongs to the inorganic carbon transporter (TC 9.A.2) DabA family. As to quaternary structure, forms a complex with DabB. The cofactor is Zn(2+).

It is found in the cell inner membrane. Part of an energy-coupled inorganic carbon pump. This is Probable inorganic carbon transporter subunit DabA from Salinibacter ruber (strain DSM 13855 / M31).